The primary structure comprises 416 residues: Gamma-glutamyl phosphate reductase (416 aa).

It belongs to the gamma-glutamyl phosphate reductase family.

It is found in the cytoplasm. It carries out the reaction L-glutamate 5-semialdehyde + phosphate + NADP(+) = L-glutamyl 5-phosphate + NADPH + H(+). It functions in the pathway amino-acid biosynthesis; L-proline biosynthesis; L-glutamate 5-semialdehyde from L-glutamate: step 2/2. Functionally, catalyzes the NADPH-dependent reduction of L-glutamate 5-phosphate into L-glutamate 5-semialdehyde and phosphate. The product spontaneously undergoes cyclization to form 1-pyrroline-5-carboxylate. This chain is Gamma-glutamyl phosphate reductase, found in Streptococcus uberis (strain ATCC BAA-854 / 0140J).